The primary structure comprises 341 residues: Holliday junction branch migration complex subunit RuvB (341 aa).

The large ATPase domain (RuvB-L) stretch occupies residues 3 to 184; that stretch reads DDFDIRDARM…FGINMHLEYY (182 aa). ATP-binding positions include leucine 23, arginine 24, glycine 65, lysine 68, threonine 69, threonine 70, 131 to 133, arginine 174, tyrosine 184, and arginine 221; that span reads EDY. Threonine 69 lines the Mg(2+) pocket. The small ATPAse domain (RuvB-S) stretch occupies residues 185–255; sequence DMETLTKIVL…IACFSLEALN (71 aa). The interval 258–341 is head domain (RuvB-H); it reads RYGLDQIDNK…RVGEQGFLFD (84 aa). Residues arginine 313 and arginine 318 each coordinate DNA.

It belongs to the RuvB family. Homohexamer. Forms an RuvA(8)-RuvB(12)-Holliday junction (HJ) complex. HJ DNA is sandwiched between 2 RuvA tetramers; dsDNA enters through RuvA and exits via RuvB. An RuvB hexamer assembles on each DNA strand where it exits the tetramer. Each RuvB hexamer is contacted by two RuvA subunits (via domain III) on 2 adjacent RuvB subunits; this complex drives branch migration. In the full resolvosome a probable DNA-RuvA(4)-RuvB(12)-RuvC(2) complex forms which resolves the HJ.

The protein localises to the cytoplasm. It carries out the reaction ATP + H2O = ADP + phosphate + H(+). The RuvA-RuvB-RuvC complex processes Holliday junction (HJ) DNA during genetic recombination and DNA repair, while the RuvA-RuvB complex plays an important role in the rescue of blocked DNA replication forks via replication fork reversal (RFR). RuvA specifically binds to HJ cruciform DNA, conferring on it an open structure. The RuvB hexamer acts as an ATP-dependent pump, pulling dsDNA into and through the RuvAB complex. RuvB forms 2 homohexamers on either side of HJ DNA bound by 1 or 2 RuvA tetramers; 4 subunits per hexamer contact DNA at a time. Coordinated motions by a converter formed by DNA-disengaged RuvB subunits stimulates ATP hydrolysis and nucleotide exchange. Immobilization of the converter enables RuvB to convert the ATP-contained energy into a lever motion, pulling 2 nucleotides of DNA out of the RuvA tetramer per ATP hydrolyzed, thus driving DNA branch migration. The RuvB motors rotate together with the DNA substrate, which together with the progressing nucleotide cycle form the mechanistic basis for DNA recombination by continuous HJ branch migration. Branch migration allows RuvC to scan DNA until it finds its consensus sequence, where it cleaves and resolves cruciform DNA. This Parabacteroides distasonis (strain ATCC 8503 / DSM 20701 / CIP 104284 / JCM 5825 / NCTC 11152) protein is Holliday junction branch migration complex subunit RuvB.